A 122-amino-acid polypeptide reads, in one-letter code: Large ribosomal subunit protein uL14 (122 aa).

This sequence belongs to the universal ribosomal protein uL14 family. Part of the 50S ribosomal subunit. Forms a cluster with proteins L3 and L19. In the 70S ribosome, L14 and L19 interact and together make contacts with the 16S rRNA in bridges B5 and B8.

Binds to 23S rRNA. Forms part of two intersubunit bridges in the 70S ribosome. This Nitrosomonas eutropha (strain DSM 101675 / C91 / Nm57) protein is Large ribosomal subunit protein uL14.